Consider the following 296-residue polypeptide: Cobalamin trafficking protein CblD (296 aa).

A mitochondrion-targeting transit peptide spans 1–38 (MAHVLCNRARLVSYLPGFCSLVKRVINPRAFSTAGSSG). An N6-acetyllysine modification is found at K203.

As to quaternary structure, heterodimer with MMACHC. Forms a multiprotein complex with MMACHC, MTR and MTRR.

It localises to the cytoplasm. The protein resides in the mitochondrion. In terms of biological role, involved in cobalamin metabolism and trafficking. Plays a role in regulating the biosynthesis and the proportion of two coenzymes, methylcob(III)alamin (MeCbl) and 5'-deoxyadenosylcobalamin (AdoCbl). Promotes oxidation of cob(II)alamin bound to MMACHC. The processing of cobalamin in the cytosol occurs in a multiprotein complex composed of at least MMACHC, MMADHC, MTRR (methionine synthase reductase) and MTR (methionine synthase) which may contribute to shuttle safely and efficiently cobalamin towards MTR in order to produce methionine. The protein is Cobalamin trafficking protein CblD of Mus musculus (Mouse).